Reading from the N-terminus, the 828-residue chain is Periplasmic nitrate reductase (828 aa).

Residues 1–31 constitute a signal peptide (tat-type signal); that stretch reads MKLSRRSFMKANAVAAVAAAAGLSVPGVARA. The 57-residue stretch at 39–95 folds into the 4Fe-4S Mo/W bis-MGD-type domain; that stretch reads IKWDKAPCRFCGTGCGVLVGTQQGRVVACQGDPDAPVNRGLNCIKGYFLPKIMYGKD. Residues cysteine 46, cysteine 49, cysteine 53, and cysteine 81 each contribute to the [4Fe-4S] cluster site. Mo-bis(molybdopterin guanine dinucleotide) is bound by residues lysine 83, glutamine 150, asparagine 175, cysteine 179, 212-219, 243-247, 262-264, methionine 372, glutamine 376, asparagine 482, 508-509, lysine 531, aspartate 558, and 718-727; these read WGANMAEM, STYQH, QSD, SD, and TGRVLEHWHT. Phenylalanine 794 lines the substrate pocket. Positions 802 and 819 each coordinate Mo-bis(molybdopterin guanine dinucleotide).

It belongs to the prokaryotic molybdopterin-containing oxidoreductase family. NasA/NapA/NarB subfamily. In terms of assembly, component of the periplasmic nitrate reductase NapAB complex composed of NapA and NapB. The cofactor is [4Fe-4S] cluster. It depends on Mo-bis(molybdopterin guanine dinucleotide) as a cofactor. In terms of processing, predicted to be exported by the Tat system. The position of the signal peptide cleavage has not been experimentally proven.

The protein localises to the periplasm. It carries out the reaction 2 Fe(II)-[cytochrome] + nitrate + 2 H(+) = 2 Fe(III)-[cytochrome] + nitrite + H2O. Catalytic subunit of the periplasmic nitrate reductase complex NapAB. Receives electrons from NapB and catalyzes the reduction of nitrate to nitrite. The protein is Periplasmic nitrate reductase of Shigella boydii serotype 4 (strain Sb227).